The sequence spans 350 residues: Pro-cathepsin H (350 aa).

The first 19 residues, 1-19 (MAQWTLLIVFFCVATAAAG), serve as a signal peptide directing secretion. Residues 20-113 (LSFHDSNPIR…WEEFRSHRLG (94 aa)) constitute a propeptide, activation peptide. An N-linked (GlcNAc...) asparagine glycan is attached at Asn-117. The propeptide at 122–132 (LKGNHRITDVV) is removed in mature form. 2 disulfides stabilise this stretch: Cys-154/Cys-197 and Cys-188/Cys-230. Cys-157 is a catalytic residue. Residue Asn-177 is glycosylated (N-linked (GlcNAc...) asparagine). Residue Asn-246 is glycosylated (N-linked (GlcNAc...) asparagine). The cysteines at positions 288 and 338 are disulfide-linked. Residues His-297 and Asn-317 contribute to the active site.

The protein belongs to the peptidase C1 family. In terms of assembly, interacts with KPI104 and KPI106. Composed of a mini chain and a large chain. The large chain may be split into heavy and light chain. All chains are held together by disulfide bonds.

It is found in the vacuole. It localises to the lysosome. The catalysed reaction is Hydrolysis of proteins, acting as an aminopeptidase (notably, cleaving Arg-|-Xaa bonds) as well as an endopeptidase.. In terms of biological role, may play a role in proteolysis leading to mobilization of nitrogen during senescence and starvation. The chain is Pro-cathepsin H from Medicago truncatula (Barrel medic).